We begin with the raw amino-acid sequence, 600 residues long: Elongation factor 4 (600 aa).

One can recognise a tr-type G domain in the interval 5-187; it reads KYIRNFSIIA…AIVNKLPPPK (183 aa). GTP contacts are provided by residues 17-22 and 134-137; these read DHGKST and NKID.

This sequence belongs to the TRAFAC class translation factor GTPase superfamily. Classic translation factor GTPase family. LepA subfamily.

The protein localises to the cell inner membrane. The enzyme catalyses GTP + H2O = GDP + phosphate + H(+). In terms of biological role, required for accurate and efficient protein synthesis under certain stress conditions. May act as a fidelity factor of the translation reaction, by catalyzing a one-codon backward translocation of tRNAs on improperly translocated ribosomes. Back-translocation proceeds from a post-translocation (POST) complex to a pre-translocation (PRE) complex, thus giving elongation factor G a second chance to translocate the tRNAs correctly. Binds to ribosomes in a GTP-dependent manner. In Rickettsia felis (strain ATCC VR-1525 / URRWXCal2) (Rickettsia azadi), this protein is Elongation factor 4.